The primary structure comprises 595 residues: Putative terpenoid synthase 16 (595 aa).

Positions 349, 353, 494, and 502 each coordinate Mg(2+). Residues 349 to 353 (DDTCD) carry the DDXXD motif motif.

Belongs to the terpene synthase family. Tpsa subfamily. Mg(2+) serves as cofactor. Mn(2+) is required as a cofactor.

Its subcellular location is the cytoplasm. It functions in the pathway secondary metabolite biosynthesis; terpenoid biosynthesis. The sequence is that of Putative terpenoid synthase 16 (TPS16) from Arabidopsis thaliana (Mouse-ear cress).